A 93-amino-acid polypeptide reads, in one-letter code: UPF0473 protein BH1270 (93 aa).

This sequence belongs to the UPF0473 family.

The protein is UPF0473 protein BH1270 of Halalkalibacterium halodurans (strain ATCC BAA-125 / DSM 18197 / FERM 7344 / JCM 9153 / C-125) (Bacillus halodurans).